Reading from the N-terminus, the 189-residue chain is GTPase NRas (189 aa).

Residues Gly-10–Ala-18 and Val-29–Asp-30 contribute to the GTP site. The short motif at Tyr-32–Tyr-40 is the Effector region element. A (Microbial infection) O-linked (Glc) threonine; by P.sordellii toxin TcsL glycan is attached at Thr-35. Residue Asp-57–Gln-61 coordinates GTP. Ser-89 carries the phosphoserine modification. Asn-116 to Asp-119 lines the GTP pocket. The segment at Tyr-166 to Pro-185 is hypervariable region. A Glycyl lysine isopeptide (Lys-Gly) (interchain with G-Cter in ubiquitin) cross-link involves residue Lys-170. Cys-181 carries the S-palmitoyl cysteine lipid modification. Residue Cys-186 is the site of S-farnesyl cysteine attachment. Positions Val-187–Met-189 are cleaved as a propeptide — removed in mature form.

It belongs to the small GTPase superfamily. Ras family. Interacts (active GTP-bound form preferentially) with RGS14. Interacts (active GTP-bound form) with RASSF7. Interacts (active GTP-bound form) with both SHOC2 and PP1c (all isoforms) to form a tertiary complex; SHOC2 and PP1c preferably bind M-Ras/MRAS, but they also bind K-Ras/KRAS, N-Ras/NRAS and H-Ras/HRAS. In terms of processing, palmitoylated by the ZDHHC9-GOLGA7 complex. Depalmitoylated by ABHD17A, ABHD17B and ABHD17C. A continuous cycle of de- and re-palmitoylation regulates rapid exchange between plasma membrane and Golgi. Acetylation at Lys-104 prevents interaction with guanine nucleotide exchange factors (GEFs). Post-translationally, fatty-acylated at Lys-169 and/or Lys-170. In terms of processing, ubiquitinated by the BCR(LZTR1) E3 ubiquitin ligase complex at Lys-170 in a non-degradative manner, leading to inhibit Ras signaling by decreasing Ras association with membranes. Phosphorylation at Ser-89 enhances NRAS association with its downstream effectors. Post-translationally, (Microbial infection) Glucosylated at Thr-35 by P.sordellii toxin TcsL.

It is found in the cell membrane. Its subcellular location is the golgi apparatus membrane. The catalysed reaction is GTP + H2O = GDP + phosphate + H(+). Its activity is regulated as follows. Alternates between an inactive form bound to GDP and an active form bound to GTP. Activated by a guanine nucleotide-exchange factor (GEF) and inactivated by a GTPase-activating protein (GAP). In terms of biological role, ras proteins bind GDP/GTP and possess intrinsic GTPase activity. This is GTPase NRas (NRAS) from Homo sapiens (Human).